A 91-amino-acid chain; its full sequence is Signal recognition particle 19 kDa protein (91 aa).

It belongs to the SRP19 family. Part of the signal recognition particle protein translocation system, which is composed of SRP and FtsY. Archaeal SRP consists of a 7S RNA molecule of 300 nucleotides and two protein subunits: SRP54 and SRP19.

It localises to the cytoplasm. Functionally, involved in targeting and insertion of nascent membrane proteins into the cytoplasmic membrane. Binds directly to 7S RNA and mediates binding of the 54 kDa subunit of the SRP. The sequence is that of Signal recognition particle 19 kDa protein from Methanothermobacter thermautotrophicus (strain ATCC 29096 / DSM 1053 / JCM 10044 / NBRC 100330 / Delta H) (Methanobacterium thermoautotrophicum).